The sequence spans 452 residues: Tol-Pal system protein TolB (452 aa).

Positions 1-31 (MCGVRRGMGVLLLFCAVALCAMPFVVRSVWG) are cleaved as a signal peptide.

It belongs to the TolB family. As to quaternary structure, the Tol-Pal system is composed of five core proteins: the inner membrane proteins TolA, TolQ and TolR, the periplasmic protein TolB and the outer membrane protein Pal. They form a network linking the inner and outer membranes and the peptidoglycan layer.

The protein localises to the periplasm. In terms of biological role, part of the Tol-Pal system, which plays a role in outer membrane invagination during cell division and is important for maintaining outer membrane integrity. This chain is Tol-Pal system protein TolB, found in Syntrophus aciditrophicus (strain SB).